The sequence spans 159 residues: Cyclic pyranopterin monophosphate synthase (159 aa).

Substrate-binding positions include 75–77 and 113–114; these read LCH and ME. The active site involves D128.

It belongs to the MoaC family. In terms of assembly, homohexamer; trimer of dimers.

It catalyses the reaction (8S)-3',8-cyclo-7,8-dihydroguanosine 5'-triphosphate = cyclic pyranopterin phosphate + diphosphate. It functions in the pathway cofactor biosynthesis; molybdopterin biosynthesis. Functionally, catalyzes the conversion of (8S)-3',8-cyclo-7,8-dihydroguanosine 5'-triphosphate to cyclic pyranopterin monophosphate (cPMP). The protein is Cyclic pyranopterin monophosphate synthase of Yersinia pseudotuberculosis serotype O:3 (strain YPIII).